The primary structure comprises 402 residues: NADH-quinone oxidoreductase subunit D (402 aa).

This sequence belongs to the complex I 49 kDa subunit family. NDH-1 is composed of 14 different subunits. Subunits NuoB, C, D, E, F, and G constitute the peripheral sector of the complex.

It is found in the cell inner membrane. The enzyme catalyses a quinone + NADH + 5 H(+)(in) = a quinol + NAD(+) + 4 H(+)(out). Its function is as follows. NDH-1 shuttles electrons from NADH, via FMN and iron-sulfur (Fe-S) centers, to quinones in the respiratory chain. The immediate electron acceptor for the enzyme in this species is believed to be ubiquinone. Couples the redox reaction to proton translocation (for every two electrons transferred, four hydrogen ions are translocated across the cytoplasmic membrane), and thus conserves the redox energy in a proton gradient. The chain is NADH-quinone oxidoreductase subunit D from Cereibacter sphaeroides (strain ATCC 17029 / ATH 2.4.9) (Rhodobacter sphaeroides).